Here is a 128-residue protein sequence, read N- to C-terminus: Holo-[acyl-carrier-protein] synthase (128 aa).

The Mg(2+) site is built by aspartate 8 and glutamate 57.

This sequence belongs to the P-Pant transferase superfamily. AcpS family. The cofactor is Mg(2+).

The protein resides in the cytoplasm. It catalyses the reaction apo-[ACP] + CoA = holo-[ACP] + adenosine 3',5'-bisphosphate + H(+). Functionally, transfers the 4'-phosphopantetheine moiety from coenzyme A to a Ser of acyl-carrier-protein. The protein is Holo-[acyl-carrier-protein] synthase of Syntrophus aciditrophicus (strain SB).